Here is a 542-residue protein sequence, read N- to C-terminus: Protein GDAP2 homolog (542 aa).

A Macro domain is found at 58-237 (RSPFPLSKDV…TYEVLAPLYF (180 aa)). A disordered region spans residues 277–304 (PQHSVHMRHGHTDDDSDVSPHDMEGNSS). The span at 286–300 (GHTDDDSDVSPHDME) shows a compositional bias: basic and acidic residues. Residues 373 to 530 (QVEDLTEVSG…YITEYDMATN (158 aa)) form the CRAL-TRIO domain.

This sequence belongs to the GDAP2 family.

The polypeptide is Protein GDAP2 homolog (Drosophila pseudoobscura pseudoobscura (Fruit fly)).